Here is a 707-residue protein sequence, read N- to C-terminus: DNA ligase (707 aa).

NAD(+)-binding positions include 48–52, 97–98, and Glu134; these read DAEYD and SI. The N6-AMP-lysine intermediate role is filled by Lys136. Arg157, Glu193, Lys320, and Lys344 together coordinate NAD(+). Positions 438, 441, 456, and 462 each coordinate Zn(2+). Residues 621 to 707 enclose the BRCT domain; sequence VAPKPLSGKT…DSPPDERIPA (87 aa).

This sequence belongs to the NAD-dependent DNA ligase family. LigA subfamily. Mg(2+) is required as a cofactor. Mn(2+) serves as cofactor.

The catalysed reaction is NAD(+) + (deoxyribonucleotide)n-3'-hydroxyl + 5'-phospho-(deoxyribonucleotide)m = (deoxyribonucleotide)n+m + AMP + beta-nicotinamide D-nucleotide.. In terms of biological role, DNA ligase that catalyzes the formation of phosphodiester linkages between 5'-phosphoryl and 3'-hydroxyl groups in double-stranded DNA using NAD as a coenzyme and as the energy source for the reaction. It is essential for DNA replication and repair of damaged DNA. This is DNA ligase from Polaromonas naphthalenivorans (strain CJ2).